A 68-amino-acid polypeptide reads, in one-letter code: U-scoloptoxin(02)-Er1a (68 aa).

The first 20 residues, 1–20, serve as a signal peptide directing secretion; it reads MIVSLRCCLLLVALLITVET. 3 disulfide bridges follow: cysteine 30–cysteine 52, cysteine 38–cysteine 58, and cysteine 42–cysteine 60.

It belongs to the invertebrate defensin family. As to expression, expressed by the venom gland.

It is found in the secreted. Its function is as follows. Antibacterial peptide mostly active against Gram-positive bacteria. In Ethmostigmus rubripes (Giant centipede), this protein is U-scoloptoxin(02)-Er1a.